A 296-amino-acid chain; its full sequence is 4-diphosphocytidyl-2-C-methyl-D-erythritol kinase (296 aa).

The active site involves Lys-14. 97-107 (PMGAGMGGGSS) contributes to the ATP binding site. The active site involves Asp-139.

This sequence belongs to the GHMP kinase family. IspE subfamily.

It catalyses the reaction 4-CDP-2-C-methyl-D-erythritol + ATP = 4-CDP-2-C-methyl-D-erythritol 2-phosphate + ADP + H(+). It participates in isoprenoid biosynthesis; isopentenyl diphosphate biosynthesis via DXP pathway; isopentenyl diphosphate from 1-deoxy-D-xylulose 5-phosphate: step 3/6. Catalyzes the phosphorylation of the position 2 hydroxy group of 4-diphosphocytidyl-2C-methyl-D-erythritol. This is 4-diphosphocytidyl-2-C-methyl-D-erythritol kinase from Polynucleobacter necessarius subsp. necessarius (strain STIR1).